A 62-amino-acid polypeptide reads, in one-letter code: Statherin (62 aa).

An N-terminal signal peptide occupies residues M1–A19. Residues D20–K25 form a hydroxyapatite-binding; inhibits crystal growth region. Residues S21 and S22 each carry the phosphoserine modification. A cross-link (isoglutamyl lysine isopeptide (Lys-Gln); in form cyclo-statherin Q-37) is located at residues K25–Q56. A cross-link (isoglutamyl lysine isopeptide (Lys-Gln); in form cyclo-statherin Q-39) is located at residues K25–Q58. Residues G38 to F62 are hydrophobic; inhibits precipitation of calcium phosphate salts.

It belongs to the histatin/statherin family. Post-translationally, substrate for transglutaminase-2. More than 95% of the cyclized peptide is cyclo-statherin Q-37, and less than 5% is cyclo-statherin Q-39. Cyclized forms account for about 1% of total statherin in saliva. In terms of processing, sulfated on tyrosine residues. Secreted by parotid and submandibular glands.

The protein resides in the secreted. Functionally, salivary protein that stabilizes saliva supersaturated with calcium salts by inhibiting the precipitation of calcium phosphate salts. It also modulates hydroxyapatite crystal formation on the tooth surface. This is Statherin (STATH) from Homo sapiens (Human).